A 4243-amino-acid chain; its full sequence is Fibrocystin-L (4243 aa).

The signal sequence occupies residues 1-20; it reads MGHLWLLGIWGLCGLLLCAA. The Extracellular segment spans residues 21-4210; it reads DPSTDGSQII…KASTVGTYAQ (4190 aa). IPT/TIG domains are found at residues 31-129, 146-255, and 270-361; these read PKVT…TCKG, PTIR…KMAY, and AEVT…ILEY. Thr122 carries an O-linked (GalNAc...) threonine glycan. Residues 337-492 enclose the PA14 domain; sequence PGGRGLKLEV…NVYTEQQTGD (156 aa). Thr445 carries an O-linked (GalNAc...) threonine glycan. IPT/TIG domains follow at residues 1067–1151, 1155–1234, 1240–1322, 1330–1469, 1566–1649, 1659–1743, 1749–1828, 1831–1910, 1916–1997, 1999–2085, and 2091–2176; these read PLVL…EFYF, SQIS…AFSY, PIIT…RDKL, LEVT…SFSY, PSIS…TLSN, PNID…TFSY, PYIT…NLTV, PPVA…LFTY, PFLR…VFEY, LNIQ…PFTY, and PLIT…DFLY. 2 O-linked (GalNAc...) threonine glycosylation sites follow: Thr1803 and Thr1839. Positions 2184-2304 constitute a G8 1 domain; that stretch reads FSWGGKSPPE…VPVTWTRLAH (121 aa). Thr2320 carries O-linked (GalNAc...) threonine glycosylation. PbH1 repeat units lie at residues 2508–2530, 2566–2588, 2665–2687, and 2733–2756; these read THHL…FIED, NPNN…WYRM, GGAL…ETKR, and SEGL…ALGV. Residues 3036–3174 enclose the G8 2 domain; it reads SFWQSSRENN…HSIYKTKLSE (139 aa). PbH1 repeat units follow at residues 3293 to 3315, 3355 to 3377, 3416 to 3438, 3471 to 3493, and 3527 to 3548; these read KGNA…RDST, TDGL…RIWG, GTNT…RIDG, PGCS…YFQT, and SKNV…NCSD. O-linked (GalNAc...) threonine glycosylation occurs at Thr3736. A helical transmembrane segment spans residues 4211 to 4231; the sequence is IMTVVISCLVGRMWLLEIFMA. The Cytoplasmic segment spans residues 4232 to 4243; sequence AVSTLNITLRSY.

It is found in the membrane. The protein resides in the cell projection. The protein localises to the stereocilium membrane. In terms of biological role, component of hair-cell stereocilia coat. Required for normal hearing. This chain is Fibrocystin-L (PKHD1L1), found in Homo sapiens (Human).